A 270-amino-acid polypeptide reads, in one-letter code: tRNA pseudouridine synthase A (270 aa).

Aspartate 60 (nucleophile) is an active-site residue. The RNA binding stretch occupies residues 107 to 111 (FHARF). Tyrosine 118 lines the substrate pocket. The segment at 168-172 (QCQSR) is interaction with tRNA.

The protein belongs to the tRNA pseudouridine synthase TruA family. Homodimer.

It carries out the reaction uridine(38/39/40) in tRNA = pseudouridine(38/39/40) in tRNA. Its function is as follows. Formation of pseudouridine at positions 38, 39 and 40 in the anticodon stem and loop of transfer RNAs. This Escherichia fergusonii (strain ATCC 35469 / DSM 13698 / CCUG 18766 / IAM 14443 / JCM 21226 / LMG 7866 / NBRC 102419 / NCTC 12128 / CDC 0568-73) protein is tRNA pseudouridine synthase A.